Consider the following 648-residue polypeptide: Chaperone protein DnaK (648 aa).

Thr-200 carries the phosphothreonine; by autocatalysis modification. The tract at residues 612-631 is disordered; it reads QAGAAGAAGAAEGAAQGGAQ.

This sequence belongs to the heat shock protein 70 family.

Functionally, acts as a chaperone. The protein is Chaperone protein DnaK of Burkholderia multivorans (strain ATCC 17616 / 249).